Here is a 49-residue protein sequence, read N- to C-terminus: DNA-directed RNA polymerase subunit Rpo12 (49 aa).

The Zn(2+) site is built by Cys-11, Cys-27, and Cys-30.

This sequence belongs to the archaeal Rpo12/eukaryotic RPC10 RNA polymerase subunit family. As to quaternary structure, part of the RNA polymerase complex. Zn(2+) is required as a cofactor.

The protein localises to the cytoplasm. It catalyses the reaction RNA(n) + a ribonucleoside 5'-triphosphate = RNA(n+1) + diphosphate. In terms of biological role, DNA-dependent RNA polymerase (RNAP) catalyzes the transcription of DNA into RNA using the four ribonucleoside triphosphates as substrates. This is DNA-directed RNA polymerase subunit Rpo12 from Pyrococcus abyssi (strain GE5 / Orsay).